The chain runs to 335 residues: Ferrochelatase (335 aa).

Fe cation is bound by residues His-207 and Glu-288.

This sequence belongs to the ferrochelatase family.

The protein resides in the cytoplasm. The enzyme catalyses heme b + 2 H(+) = protoporphyrin IX + Fe(2+). Its pathway is porphyrin-containing compound metabolism; protoheme biosynthesis; protoheme from protoporphyrin-IX: step 1/1. Its function is as follows. Catalyzes the ferrous insertion into protoporphyrin IX. This Helicobacter pylori (strain HPAG1) protein is Ferrochelatase.